Consider the following 133-residue polypeptide: Transmembrane protein 60 (133 aa).

The next 4 membrane-spanning stretches (helical) occupy residues 5 to 25 (LAQR…MLVL), 35 to 55 (WFLI…MLIV), 78 to 98 (AWYL…CAKL), and 110 to 130 (FIPL…NVFF).

Its subcellular location is the membrane. The polypeptide is Transmembrane protein 60 (Tmem60) (Mus musculus (Mouse)).